The sequence spans 334 residues: Isocitrate/homoisocitrate dehydrogenase (334 aa).

NADH is bound at residue 70-72 (ATS). Positions 72, 85, 88, 98, 118, 125, 171, and 173 each coordinate (2R,3S)-homoisocitrate. Asparagine 173 is an NADH binding site. Residues aspartate 204, aspartate 228, and aspartate 232 each contribute to the Mg(2+) site. Residues 261-265 (GSAPD) and asparagine 273 each bind NADH.

This sequence belongs to the isocitrate and isopropylmalate dehydrogenases family. Homotetramer. Dimer of dimers. The homotetramer can transiently dissociate into homodimers. It depends on Mg(2+) as a cofactor.

It catalyses the reaction (2R,3S)-homoisocitrate + NAD(+) = 2-oxoadipate + CO2 + NADH. The enzyme catalyses D-threo-isocitrate + NAD(+) = 2-oxoglutarate + CO2 + NADH. It participates in amino-acid biosynthesis; L-lysine biosynthesis via AAA pathway; L-alpha-aminoadipate from 2-oxoglutarate: step 4/5. Its function is as follows. Catalyzes the NAD(+)-dependent oxidative decarboxylation of homoisocitrate to 2-oxoadipate (alpha-ketoadipate), a reaction involved in lysine biosynthesis through the alpha-aminoadipate pathway. In addition, has high activity with isocitrate, but is inactive with 3-isopropylmalate. This is Isocitrate/homoisocitrate dehydrogenase (hicd) from Thermus thermophilus (strain ATCC BAA-163 / DSM 7039 / HB27).